Consider the following 213-residue polypeptide: MSSSPAILPVTNQQAATQSQPPINSHAFRTFLSRLSSSLRESLSQRRPWLELVDRSSFARPDSLTDSFSRIRKNLAYFKVNYSAIVSLVLAFSLLSHPFSLLVLLSLLGSWMFLYLFRSSDQPLVLFGRSFSDRETLLGLVLTTIVVVFMTSVGSLLTSALTIGIAIVCLHGAFRVPDDLFLDEQEPANAGLLSFIGNSAATSAAASVVAGRV.

Residues 1–21 form a disordered region; that stretch reads MSSSPAILPVTNQQAATQSQP. 5 helical membrane passes run 75-94, 98-117, 137-157, 161-181, and 190-210; these read LAYFKVNYSAIVSLVLAFSL, PFSLLVLLSLLGSWMFLYLF, LLGLVLTTIVVVFMTSVGSLL, LTIGIAIVCLHGAFRVPDDLF, and AGLLSFIGNSAATSAAASVVA.

Belongs to the PRA1 family. Interacts with PRA1B1, PRA1B3, PRA1B4, PRA1B5, PRA1B6 and PRA1E.

The protein localises to the endosome membrane. May be involved in both secretory and endocytic intracellular trafficking in the endosomal/prevacuolar compartments. In Arabidopsis thaliana (Mouse-ear cress), this protein is PRA1 family protein B2 (PRA1B2).